Here is a 456-residue protein sequence, read N- to C-terminus: Methylenetetrahydrofolate--tRNA-(uracil-5-)-methyltransferase TrmFO (456 aa).

11–16 provides a ligand contact to FAD; it reads GAGLAG.

The protein belongs to the MnmG family. TrmFO subfamily. It depends on FAD as a cofactor.

The protein localises to the cytoplasm. The enzyme catalyses uridine(54) in tRNA + (6R)-5,10-methylene-5,6,7,8-tetrahydrofolate + NADH + H(+) = 5-methyluridine(54) in tRNA + (6S)-5,6,7,8-tetrahydrofolate + NAD(+). It catalyses the reaction uridine(54) in tRNA + (6R)-5,10-methylene-5,6,7,8-tetrahydrofolate + NADPH + H(+) = 5-methyluridine(54) in tRNA + (6S)-5,6,7,8-tetrahydrofolate + NADP(+). Its function is as follows. Catalyzes the folate-dependent formation of 5-methyl-uridine at position 54 (M-5-U54) in all tRNAs. The protein is Methylenetetrahydrofolate--tRNA-(uracil-5-)-methyltransferase TrmFO of Synechococcus sp. (strain CC9605).